Reading from the N-terminus, the 550-residue chain is Hydroxylamine reductase (550 aa).

The [2Fe-2S] cluster site is built by Cys3, Cys6, Cys18, and Cys25. The hybrid [4Fe-2O-2S] cluster site is built by His249, Glu273, Cys317, Cys405, Cys433, Cys458, Glu492, and Lys494. Cysteine persulfide is present on Cys405.

The protein belongs to the HCP family. It depends on [2Fe-2S] cluster as a cofactor. Hybrid [4Fe-2O-2S] cluster serves as cofactor.

The protein localises to the cytoplasm. The catalysed reaction is A + NH4(+) + H2O = hydroxylamine + AH2 + H(+). Functionally, catalyzes the reduction of hydroxylamine to form NH(3) and H(2)O. The polypeptide is Hydroxylamine reductase (Pectobacterium carotovorum subsp. carotovorum (strain PC1)).